The sequence spans 303 residues: Glycine--tRNA ligase alpha subunit (303 aa).

Belongs to the class-II aminoacyl-tRNA synthetase family. As to quaternary structure, tetramer of two alpha and two beta subunits.

The protein resides in the cytoplasm. The catalysed reaction is tRNA(Gly) + glycine + ATP = glycyl-tRNA(Gly) + AMP + diphosphate. The sequence is that of Glycine--tRNA ligase alpha subunit from Syntrophomonas wolfei subsp. wolfei (strain DSM 2245B / Goettingen).